A 680-amino-acid polypeptide reads, in one-letter code: DNA-directed RNA polymerase subunit beta' (680 aa).

Residues Cys69, Cys71, Cys87, and Cys90 each contribute to the Zn(2+) site. Positions 489, 491, and 493 each coordinate Mg(2+).

The protein belongs to the RNA polymerase beta' chain family. RpoC1 subfamily. In terms of assembly, in plastids the minimal PEP RNA polymerase catalytic core is composed of four subunits: alpha, beta, beta', and beta''. When a (nuclear-encoded) sigma factor is associated with the core the holoenzyme is formed, which can initiate transcription. It depends on Mg(2+) as a cofactor. Requires Zn(2+) as cofactor.

It localises to the plastid. It is found in the chloroplast. It carries out the reaction RNA(n) + a ribonucleoside 5'-triphosphate = RNA(n+1) + diphosphate. Functionally, DNA-dependent RNA polymerase catalyzes the transcription of DNA into RNA using the four ribonucleoside triphosphates as substrates. The sequence is that of DNA-directed RNA polymerase subunit beta' from Nandina domestica (Heavenly bamboo).